Reading from the N-terminus, the 582-residue chain is Semenogelin-2 (582 aa).

Positions 1 to 23 are cleaved as a signal peptide; the sequence is MKSIILFVLSLLLILEKQAAVMG. A disordered region spans residues 24–59; it reads QKGGSKGQLPSGSSQFPHGQKGQHYFGQKDQQHTKS. Over residues 31-40 the composition is skewed to polar residues; it reads QLPSGSSQFP. Tandem repeats lie at residues 70-129, 141-200, and 201-260. The interval 70–559 is repeat-rich region; the sequence is HVDINDHDWT…SSESHNIVIT (490 aa). 4 disordered regions span residues 132 to 160, 173 to 194, 228 to 248, and 269 to 582; these read GGQA…SQCS, KEQA…QSSY, EEHS…RLQH, and QTKN…PIST. 2 stretches are compositionally biased toward polar residues: residues 137–160 and 174–194; these read HGTQ…SQCS and EQAS…QSSY. The tract at residues 261-500 is 4 X 60 AA tandem repeats, type I; sequence LVYNKNQHQT…QSSISFQIEK (240 aa). Asparagine 272 carries an N-linked (GlcNAc...) asparagine glycan. The span at 292–310 shows a compositional bias: basic and acidic residues; that stretch reads RTEERQLHHGEKSVQKDVS. Over residues 325–334 the composition is skewed to polar residues; it reads KSQNQVTIHS. The span at 335-345 shows a compositional bias: basic and acidic residues; that stretch reads QDQEHGHKENK. The segment covering 372-397 has biased composition (polar residues); sequence GSISIQTEEQIHGKSQNQVRIPSQAQ. Residues 413–426 show a composition bias toward basic and acidic residues; the sequence is TEERRLNSGEKDVQ. Over residues 445–455 the composition is skewed to polar residues; that stretch reads KSQNQVTIPSQ. The span at 456 to 465 shows a compositional bias: basic and acidic residues; it reads DQEHGHKENK. Composition is skewed to polar residues over residues 482–496 and 506–532; these read GKST…SISF and SQIQ…QSAD. One copy of the 3-2 repeat lies at 501 to 559; that stretch reads LVEGKSQIQTPNPNQDQWSGQNAKGKSGQSADSKQDLLSHEQKGRYKQESSESHNIVIT. Composition is skewed to basic and acidic residues over residues 533 to 552 and 559 to 582; these read SKQD…ESSE and TEHE…PIST.

This sequence belongs to the semenogelin family. Interacts with SERPINA5. Semenogelin-2 is thought to form both the 71 kDa polypeptide and, in its glycosylated form, the 76 kDa polypeptide. As to expression, seminal vesicles, and to a much lesser extent, epididymis.

It is found in the secreted. In terms of biological role, participates in the formation of a gel matrix (sperm coagulum) entrapping the accessory gland secretions and ejaculated spermatozoa. This chain is Semenogelin-2 (SEMG2), found in Homo sapiens (Human).